The primary structure comprises 256 residues: Phosphatidylglycerol--prolipoprotein diacylglyceryl transferase (256 aa).

3 helical membrane-spanning segments follow: residues 19-39, 56-76, and 91-111; these read VHWY…LGYW, LIFY…MLFY, and IWEG…AAWL. Arginine 139 lines the a 1,2-diacyl-sn-glycero-3-phospho-(1'-sn-glycerol) pocket. Residues 231–251 traverse the membrane as a helical segment; the sequence is FGWLTMGQVLSIPMLLIGIWL.

This sequence belongs to the Lgt family.

The protein resides in the cell inner membrane. It catalyses the reaction L-cysteinyl-[prolipoprotein] + a 1,2-diacyl-sn-glycero-3-phospho-(1'-sn-glycerol) = an S-1,2-diacyl-sn-glyceryl-L-cysteinyl-[prolipoprotein] + sn-glycerol 1-phosphate + H(+). Its pathway is protein modification; lipoprotein biosynthesis (diacylglyceryl transfer). In terms of biological role, catalyzes the transfer of the diacylglyceryl group from phosphatidylglycerol to the sulfhydryl group of the N-terminal cysteine of a prolipoprotein, the first step in the formation of mature lipoproteins. This chain is Phosphatidylglycerol--prolipoprotein diacylglyceryl transferase, found in Legionella pneumophila (strain Paris).